Here is a 508-residue protein sequence, read N- to C-terminus: MDNCDQDASFRLSHIKEEVKPDISQLNDSNNSSFSPKAESPVPFMQAMSMVHVLPGSNSASSNNNSAGDAQMAQAPNSAGGSAAAAVQQQYPPNHPLSGSKHLCSICGDRASGKHYGVYSCEGCKGFFKRTVRKDLTYACRENRNCIIDKRQRNRCQYCRYQKCLTCGMKREAVQEERQRGARNAAGRLSASGGGSSGPGSVGGSSSQGGGGGGGVSGGMGSGNGSDDFMTNSVSRDFSIERIIEAEQRAETQCGDRALTFLRVGPYSTVQPDYKGAVSALCQVVNKQLFQMVEYARMMPHFAQVPLDDQVILLKAAWIELLIANVAWCSIVSLDDGGAGGGGGGLGHDGSFERRSPGLQPQQLFLNQSFSYHRNSAIKAGVSAIFDRILSELSVKMKRLNLDRRELSCLKAIILYNPDIRGIKSRAEIEMCREKVYACLDEHCRLEHPGDDGRFAQLLLRLPALRSISLKCQDHLFLFRITSDRPLEELFLEQLEAPPPPGLAMKLE.

Residues 1 to 103 are modulating; it reads MDNCDQDASF…NHPLSGSKHL (103 aa). Disordered stretches follow at residues 21–40 and 55–92; these read PDIS…KAES and PGSN…QQYP. The span at 24 to 35 shows a compositional bias: polar residues; the sequence is SQLNDSNNSSFS. Residue serine 35 is modified to Phosphoserine. Positions 57–90 are enriched in low complexity; the sequence is SNSASSNNNSAGDAQMAQAPNSAGGSAAAAVQQQ. 2 consecutive NR C4-type zinc fingers follow at residues 104 to 124 and 140 to 164; these read CSIC…CEGC and CREN…YQKC. Positions 104-169 form a DNA-binding region, nuclear receptor; sequence CSICGDRASG…RYQKCLTCGM (66 aa). The segment at 170-223 is hinge; sequence KREAVQEERQRGARNAAGRLSASGGGSSGPGSVGGSSSQGGGGGGGVSGGMGSG. The segment at 178-228 is disordered; the sequence is RQRGARNAAGRLSASGGGSSGPGSVGGSSSQGGGGGGGVSGGMGSGNGSDD. Gly residues predominate over residues 192-224; the sequence is SGGGSSGPGSVGGSSSQGGGGGGGVSGGMGSGN. In terms of domain architecture, NR LBD spans 239 to 498; it reads SIERIIEAEQ…ELFLEQLEAP (260 aa).

This sequence belongs to the nuclear hormone receptor family. NR2 subfamily. In terms of assembly, heterodimer of USP and ECR. Only the heterodimer is capable of high-affinity binding to ecdysone.

It is found in the nucleus. Functionally, receptor for ecdysone. May be an important modulator of insect metamorphosis. Plays an important part in embryonic and post-embryonic development. Binds to ecdysone response elements (ECRES) such as in the promoter region of s15 chorion gene. This chain is Protein ultraspiracle (usp), found in Drosophila melanogaster (Fruit fly).